The following is a 449-amino-acid chain: Capsid protein (449 aa).

Positions 1–43 (MARRARRPRGRFYSFRRGRWHHLKRLRRRYKFRHRRRQRYRRR) are DNA-binding. Positions 6–47 (RRPRGRFYSFRRGRWHHLKRLRRRYKFRHRRRQRYRRRAFRK) are nuclear localization signals.

Belongs to the gyrovirus capsid protein family. As to quaternary structure, homomultimer (Potential). Interacts with Rep; this interaction relocates Rep into the nucleus.

The protein resides in the host nucleus. The protein localises to the virion. Functionally, self-assembles to form the virion icosahedral capsid with a T=1 symmetry. This very small capsid (25 nm in diameter) allows the virus to be very stable in the environment and resistant to some disinfectants, including detergents. Essential for the initial attachment to host receptors. After attachment, the virus is endocytosed and traffics to the nucleus. The capsid protein binds and transports the viral genome and Rep across the nuclear envelope. The protein is Capsid protein (VP1) of Gallus gallus (Chicken).